Here is a 144-residue protein sequence, read N- to C-terminus: Large ribosomal subunit protein uL15 (144 aa).

Residues 1–58 (MKLNNLSPAPGSKHAEKRVGRGIGSGLGKTGGRGHKGQKSRSGGSVKPGFEGGQMPLQ) form a disordered region. Residues 21-31 (RGIGSGLGKTG) show a composition bias toward gly residues.

The protein belongs to the universal ribosomal protein uL15 family. Part of the 50S ribosomal subunit.

Binds to the 23S rRNA. This chain is Large ribosomal subunit protein uL15, found in Chromohalobacter salexigens (strain ATCC BAA-138 / DSM 3043 / CIP 106854 / NCIMB 13768 / 1H11).